A 200-amino-acid polypeptide reads, in one-letter code: Casparian strip membrane protein 2 (200 aa).

Topologically, residues 1–37 are cytoplasmic; sequence MMKSDSVAIDVPESSSVAKRKAPFMANIRDENGGYKK. The chain crosses the membrane as a helical span at residues 38–58; the sequence is GLAIFDFILRLGAIAAALGAA. The Extracellular segment spans residues 59–88; it reads STMGTSDETLPFFTQFFQFNAGYDDFPTFQ. A helical transmembrane segment spans residues 89–109; the sequence is FFVIAMAMVAGYLVLSLPFSI. The Cytoplasmic portion of the chain corresponds to 110–121; that stretch reads VSICRPHAAGPR. The chain crosses the membrane as a helical span at residues 122 to 142; sequence ILLFILDTVALTLNAAAGAAA. Residues 143 to 175 lie on the Extracellular side of the membrane; sequence ADIVYLAHNGNQTTNWLAICLQFGDFCREVSGS. Asn-153 carries N-linked (GlcNAc...) asparagine glycosylation. Residues 176–196 traverse the membrane as a helical segment; it reads VVASFASVVILMVLVVMSGLA. The Cytoplasmic segment spans residues 197 to 200; it reads LRRY.

The protein belongs to the Casparian strip membrane proteins (CASP) family. In terms of assembly, homodimer and heterodimers.

The protein localises to the cell membrane. Regulates membrane-cell wall junctions and localized cell wall deposition. Required for establishment of the Casparian strip membrane domain (CSD) and the subsequent formation of Casparian strips, a cell wall modification of the root endodermis that determines an apoplastic barrier between the intraorganismal apoplasm and the extraorganismal apoplasm and prevents lateral diffusion. The protein is Casparian strip membrane protein 2 of Ricinus communis (Castor bean).